The primary structure comprises 253 residues: Discoidin-1 subunit B/C (253 aa).

Ser2 carries the N-acetylserine modification. An F5/8 type C domain is found at 2–152 (STQGLVQLIS…ISLRCEFYTQ (151 aa)). The Cell attachment site motif lies at 79-81 (RGD).

As to quaternary structure, tetramer of four different chains (A to D). As to expression, stalk cells.

It localises to the cytoplasm. Galactose- and N-acetylgalactosamine-binding lectin. May play a role in cell-substratum adhesion rather than in cell-cell adhesion. May be necessary for the maintenance of normal elongate morphology during aggregation. This Dictyostelium discoideum (Social amoeba) protein is Discoidin-1 subunit B/C (dscC-1).